The sequence spans 219 residues: Beta-crystallin B2 (219 aa).

N-acetylalanine is present on Ala-2. The tract at residues 2 to 16 (ASEHQMPASKQQPAS) is N-terminal arm. Beta/gamma crystallin 'Greek key' domains lie at 17 to 56 (PNIAIFEQENFQGRCHELSGACPNLKDAGVDKVGSILVHS) and 57 to 101 (GPWV…RPIK). The connecting peptide stretch occupies residues 102–120 (VVRAPRQPLPTRQTKDSQE). Beta/gamma crystallin 'Greek key' domains follow at residues 121-162 (HKIV…RVQS) and 163-205 (GTWV…RRIR). The segment at 207-219 (MQWHQRGAYHPSN) is C-terminal arm.

The protein belongs to the beta/gamma-crystallin family. In terms of assembly, homo/heterodimer, or complexes of higher-order. The structure of beta-crystallin oligomers seems to be stabilized through interactions between the N-terminal arms.

Crystallins are the dominant structural components of the vertebrate eye lens. The chain is Beta-crystallin B2 (CRYBB2) from Gallus gallus (Chicken).